A 371-amino-acid polypeptide reads, in one-letter code: MTMRVCKWLLTFALLFAATLTPAHSASRIKDVASLQAGRDNQLIGYGLVVGLQGTGDSLRSSPFTDQSIRAMLQNLGISTQGGESRTRNVAAVLVTATLPPFASPGSRVDVTVGSLGDATSLRGGTLVMTSLSGADGQIYAVAQGSIVVTGFSAQGDAASLSQGVTTAGRVPNGAIIERELPSKFKDGFNLVLQLRNPDFSTAVGMAAAINKFASAQFGGRIAEALDSQSVLVQKPKMADLARLMADIENLVVETDVPARVVVNERTGTIVIGQDVRVNEVAVSYGTLTVQVTETPTVVQPAPFSRGETAVEPNTTIEAQSDGGTVAILNGSSLRSLVAGLNSIGVKPDGIIAILQSIKTAGALQAELVLQ.

The signal sequence occupies residues 1 to 25 (MTMRVCKWLLTFALLFAATLTPAHS).

Belongs to the FlgI family. In terms of assembly, the basal body constitutes a major portion of the flagellar organelle and consists of four rings (L,P,S, and M) mounted on a central rod.

It localises to the periplasm. The protein localises to the bacterial flagellum basal body. In terms of biological role, assembles around the rod to form the L-ring and probably protects the motor/basal body from shearing forces during rotation. The protein is Flagellar P-ring protein of Sinorhizobium fredii (strain NBRC 101917 / NGR234).